The primary structure comprises 156 residues: Small ribosomal subunit protein uS7 (156 aa).

Belongs to the universal ribosomal protein uS7 family. In terms of assembly, part of the 30S ribosomal subunit. Contacts proteins S9 and S11.

Its function is as follows. One of the primary rRNA binding proteins, it binds directly to 16S rRNA where it nucleates assembly of the head domain of the 30S subunit. Is located at the subunit interface close to the decoding center, probably blocks exit of the E-site tRNA. This is Small ribosomal subunit protein uS7 from Halalkalibacterium halodurans (strain ATCC BAA-125 / DSM 18197 / FERM 7344 / JCM 9153 / C-125) (Bacillus halodurans).